A 155-amino-acid polypeptide reads, in one-letter code: Transcriptional repressor NrdR (155 aa).

A zinc finger spans residues 3–34; sequence CPYCGHLEDRVVDSRETQDGQATRRRRACLSC. The 91-residue stretch at 49–139 folds into the ATP-cone domain; the sequence is PQVVKKDGRR…VYRAFRDVGE (91 aa).

The protein belongs to the NrdR family. Zn(2+) serves as cofactor.

Its function is as follows. Negatively regulates transcription of bacterial ribonucleotide reductase nrd genes and operons by binding to NrdR-boxes. The polypeptide is Transcriptional repressor NrdR (Anaeromyxobacter sp. (strain K)).